The sequence spans 76 residues: Omega-agatoxin-Aa3a (76 aa).

6 disulfide bridges follow: Cys2/Cys19, Cys9/Cys25, Cys16/Cys52, Cys18/Cys40, Cys27/Cys38, and Cys59/Cys67.

This sequence belongs to the neurotoxin 04 (omega-agtx) family. 03 (type II/III omega-agtx) subfamily. In terms of tissue distribution, expressed by the venom gland.

It localises to the secreted. In terms of biological role, omega-agatoxin are antagonist of voltage-gated calcium channels. They block insect neuromuscular transmission presynaptically. Potent blocker of N- (Cav2.2/CACNA1B) and L-type (Cav1/CACNA1) calcium channels. This is Omega-agatoxin-Aa3a from Agelenopsis aperta (North American funnel-web spider).